Consider the following 1700-residue polypeptide: A-kinase anchor protein SPHKAP (1700 aa).

Disordered stretches follow at residues 364–385 (SNLNPGDHEDTRNALPPRQDGE), 742–778 (IRRRETEPSCQPSDPGASQAWTKATESSSSSPLSNSH), and 793–885 (SKQD…NTQE). Over residues 768–778 (SSSSSPLSNSH) the composition is skewed to low complexity. Residues 822–831 (DSSTATTSSK) show a composition bias toward polar residues. The segment covering 839-855 (AGEDTKSPHHSENECRA) has biased composition (basic and acidic residues). The segment covering 857-873 (SEGQRSPTVSQSRSGSQ) has biased composition (polar residues). The PKA-RII subunit binding domain stretch occupies residues 929–946 (FAEELADTVVSMATEIAA). The disordered stretch occupies residues 980-1006 (KRKKESQGSGTAVRKHKPPRLSEIKRK). Residues Ser-1025, Ser-1085, Ser-1107, Ser-1120, Ser-1121, Ser-1124, Ser-1259, and Ser-1288 each carry the phosphoserine modification. Disordered regions lie at residues 1374-1414 (DSVT…PVPI), 1481-1535 (IHSD…DTSS), and 1585-1604 (GQSESTEAPASGPPTGTASP). Polar residues predominate over residues 1383–1398 (PVSSLSKTASLTNHSP). Residues 1586-1604 (QSESTEAPASGPPTGTASP) are compositionally biased toward polar residues.

Belongs to the AKAP110 family. Interacts (via the PKA-RII subunit binding domain) with the RI subunit of PKA. Interacts with SPHK1; the interaction greatly reduces SPHK1 activity. As to expression, highly expressed in heart. Both isoforms abundantly expressed in ventricle. Also expressed in spleen, ovary and brain.

The protein localises to the cytoplasm. Functionally, anchoring protein that binds preferentially to the type I regulatory subunit of c-AMP-dependent protein kinase (PKA type I) and targets it to distinct subcellular compartments. May act as a converging factor linking cAMP and sphingosine signaling pathways. Plays a regulatory role in the modulation of SPHK1. This Homo sapiens (Human) protein is A-kinase anchor protein SPHKAP (SPHKAP).